A 74-amino-acid polypeptide reads, in one-letter code: CLAVATA3/ESR (CLE)-related protein 1 (74 aa).

The N-terminal stretch at 1-22 (MANLKFLLCLFLICVSLSRSSA) is a signal peptide. A glycan (N-linked (GlcNAc...) asparagine) is linked at Asn59. 2 positions are modified to hydroxyproline: Pro66 and Pro69. Residue Pro69 is glycosylated (O-linked (Ara...) hydroxyproline).

This sequence belongs to the CLV3/ESR signal peptide family. In terms of processing, the O-glycosylation (arabinosylation) of the hydroxyproline Pro-69 enhances binding affinity of the CLE1p peptide for its receptor. As to expression, mostly expressed in roots and seedlings, and, to a lower extent, in stems and apex.

The protein resides in the secreted. It is found in the extracellular space. In terms of biological role, extracellular signal peptide that regulates cell fate. The sequence is that of CLAVATA3/ESR (CLE)-related protein 1 from Arabidopsis thaliana (Mouse-ear cress).